The following is a 159-amino-acid chain: Phosphopantetheine adenylyltransferase (159 aa).

Substrate is bound at residue Ser-9. Residues 9–10 (SF) and His-17 each bind ATP. 3 residues coordinate substrate: Lys-41, Leu-73, and Lys-87. ATP-binding positions include 88 to 90 (GLR), Glu-98, and 123 to 129 (NIHISSS).

This sequence belongs to the bacterial CoaD family. In terms of assembly, homohexamer. Requires Mg(2+) as cofactor.

It localises to the cytoplasm. The catalysed reaction is (R)-4'-phosphopantetheine + ATP + H(+) = 3'-dephospho-CoA + diphosphate. The protein operates within cofactor biosynthesis; coenzyme A biosynthesis; CoA from (R)-pantothenate: step 4/5. Functionally, reversibly transfers an adenylyl group from ATP to 4'-phosphopantetheine, yielding dephospho-CoA (dPCoA) and pyrophosphate. This Clostridium beijerinckii (strain ATCC 51743 / NCIMB 8052) (Clostridium acetobutylicum) protein is Phosphopantetheine adenylyltransferase.